A 261-amino-acid chain; its full sequence is L-erythrulose-1-phosphate isomerase (261 aa).

The Electrophile role is filled by histidine 99. The Proton acceptor role is filled by glutamate 172.

It belongs to the triosephosphate isomerase family.

It catalyses the reaction L-erythrulose 1-phosphate = D-erythrulose 4-phosphate. It participates in carbohydrate metabolism. In terms of biological role, involved in catabolism of D-apiose. Catalyzes the isomerization of L-erythrulose 1-phosphate to D-erythrulose 4-phosphate. The polypeptide is L-erythrulose-1-phosphate isomerase (Rhizobium rhizogenes (strain K84 / ATCC BAA-868) (Agrobacterium radiobacter)).